Consider the following 695-residue polypeptide: Probable pre-mRNA-splicing factor ATP-dependent RNA helicase DEAH9 (695 aa).

The 166-residue stretch at 58-223 (LYLVENHATT…FNSSKKRHAP (166 aa)) folds into the Helicase ATP-binding domain. 71–78 (GETGSGKT) lines the ATP pocket. Positions 170 to 173 (DEAH) match the DEAH box motif. The Helicase C-terminal domain occupies 261–438 (SVVSTILLIN…STVIQLKALG (178 aa)).

The protein belongs to the DEAD box helicase family. DEAH subfamily. DDX35 sub-subfamily.

It catalyses the reaction ATP + H2O = ADP + phosphate + H(+). May be involved in pre-mRNA splicing. The protein is Probable pre-mRNA-splicing factor ATP-dependent RNA helicase DEAH9 of Arabidopsis thaliana (Mouse-ear cress).